The chain runs to 459 residues: ERBB receptor feedback inhibitor 1 (459 aa).

S2 carries the post-translational modification N-acetylserine. 2 positions are modified to phosphothreonine: T126 and T130. The segment at 227–352 (QNRVVPDPNP…VMPPTQSFAP (126 aa)) is disordered. Phosphoserine occurs at positions 250 and 271. Residues 264–273 (SSCTHRASPS) show a composition bias toward polar residues. The segment covering 282-291 (PPRVPIPPRP) has biased composition (pro residues). Position 300 is a phosphoserine (S300). A compositionally biased stretch (basic and acidic residues) spans 310-323 (DEDRPPKVPPREPL). A compositionally biased stretch (polar residues) spans 324 to 335 (SRSNSRTPSPKS). The tract at residues 332 to 361 (SPKSLPSYLNGVMPPTQSFAPDPKYVSSKA) is interaction with EGFR and ERBB2 and regulation of EGFR activation. The residue at position 458 (S458) is a Phosphoserine.

The protein belongs to the MIG6 family. Interacts with EGFR and ERBB2.

It is found in the cytoplasm. Its subcellular location is the cell membrane. The protein localises to the nucleus. Functionally, negative regulator of EGFR signaling in skin morphogenesis. Acts as a negative regulator for several EGFR family members, including ERBB2, ERBB3 and ERBB4. Inhibits EGFR catalytic activity by interfering with its dimerization. Inhibits autophosphorylation of EGFR, ERBB2 and ERBB4. Important for normal keratinocyte proliferation and differentiation. Plays a role in modulating the response to steroid hormones in the uterus. Required for normal response to progesterone in the uterus and for fertility. Mediates epithelial estrogen responses in the uterus by regulating ESR1 levels and activation. Important for regulation of endometrium cell proliferation. Important for normal prenatal and perinatal lung development. The chain is ERBB receptor feedback inhibitor 1 (Errfi1) from Rattus norvegicus (Rat).